We begin with the raw amino-acid sequence, 210 residues long: N-(5'-phosphoribosyl)anthranilate isomerase (210 aa).

This sequence belongs to the TrpF family.

It carries out the reaction N-(5-phospho-beta-D-ribosyl)anthranilate = 1-(2-carboxyphenylamino)-1-deoxy-D-ribulose 5-phosphate. Its pathway is amino-acid biosynthesis; L-tryptophan biosynthesis; L-tryptophan from chorismate: step 3/5. This is N-(5'-phosphoribosyl)anthranilate isomerase from Magnetococcus marinus (strain ATCC BAA-1437 / JCM 17883 / MC-1).